The primary structure comprises 824 residues: Kinesin-like protein KIFC3 (824 aa).

The tract at residues 27 to 79 (EPKPGMARPAPASPAARPFPHTGQGRLRTGRGKDILPSGEEDSTSRTAARPSL) is disordered. Low complexity predominate over residues 33 to 46 (ARPAPASPAARPFP). Coiled coils occupy residues 100 to 360 (LTVQ…ENLA) and 393 to 430 (LLQEALRSVKAEIGQAIEEVNSNNQELLRKYRRELQLR). Positions 443–766 (NIRVIARVRP…LRFAERVRSV (324 aa)) constitute a Kinesin motor domain. 526-533 (GQTGAGKT) lines the ATP pocket. Residues 771 to 824 (GSRRTELGSWSSQEHLEWEPACQTPQPTARAHSAPGSGTSSRPGSIRRKLQPSA) form a disordered region. 2 positions are modified to phosphoserine: S811 and S815. Positions 815–824 (SIRRKLQPSA) are enriched in basic residues.

It belongs to the TRAFAC class myosin-kinesin ATPase superfamily. Kinesin family. Interacts with annexin XIIIB. As to expression, predominant expression in the kidney, testis and ovary. Also expressed in brain, heart, liver, lung and uterus.

It localises to the cytoplasm. The protein resides in the cytoskeleton. The protein localises to the cytoplasmic vesicle membrane. Its subcellular location is the cell junction. It is found in the adherens junction. It localises to the microtubule organizing center. The protein resides in the centrosome. Its function is as follows. Minus-end microtubule-dependent motor protein. Involved in apically targeted transport. Required for zonula adherens maintenance. The chain is Kinesin-like protein KIFC3 (Kifc3) from Mus musculus (Mouse).